The sequence spans 323 residues: Pantothenate kinase (323 aa).

Residue 101–108 coordinates ATP; that stretch reads GSVAVGKS.

This sequence belongs to the prokaryotic pantothenate kinase family.

Its subcellular location is the cytoplasm. It catalyses the reaction (R)-pantothenate + ATP = (R)-4'-phosphopantothenate + ADP + H(+). Its pathway is cofactor biosynthesis; coenzyme A biosynthesis; CoA from (R)-pantothenate: step 1/5. The chain is Pantothenate kinase from Xanthobacter autotrophicus (strain ATCC BAA-1158 / Py2).